A 259-amino-acid chain; its full sequence is Tryptophan synthase alpha chain (259 aa).

Residues E52 and D63 each act as proton acceptor in the active site.

This sequence belongs to the TrpA family. As to quaternary structure, tetramer of two alpha and two beta chains.

The enzyme catalyses (1S,2R)-1-C-(indol-3-yl)glycerol 3-phosphate + L-serine = D-glyceraldehyde 3-phosphate + L-tryptophan + H2O. It functions in the pathway amino-acid biosynthesis; L-tryptophan biosynthesis; L-tryptophan from chorismate: step 5/5. The alpha subunit is responsible for the aldol cleavage of indoleglycerol phosphate to indole and glyceraldehyde 3-phosphate. This is Tryptophan synthase alpha chain from Streptococcus sanguinis (strain SK36).